A 380-amino-acid chain; its full sequence is Alpha-N-acetylneuraminate alpha-2,8-sialyltransferase ST8SIA3 (380 aa).

Topologically, residues 1–9 (MRNCKMARV) are cytoplasmic. Residues 10–33 (ASVLGLVMLSVALLNLSLISYVSL) form a helical; Signal-anchor for type II membrane protein membrane-spanning segment. Over 34–380 (KKENIFATPK…LTKLTLSHCA (347 aa)) the chain is Lumenal. Asn-93 and Asn-113 each carry an N-linked (GlcNAc...) asparagine glycan. Cystine bridges form between Cys-162-Cys-313 and Cys-176-Cys-379. CMP-N-acetyl-beta-neuraminate contacts are provided by Asn-167 and Asn-190. Asn-206 carries an N-linked (GlcNAc...) asparagine glycan. Residues Ser-300, Thr-301, Gly-302, Trp-322, Tyr-336, and His-337 each coordinate CMP-N-acetyl-beta-neuraminate. His-354 (proton donor/acceptor) is an active-site residue.

This sequence belongs to the glycosyltransferase 29 family. Homodimer. In terms of processing, autopolysialylated.

It localises to the golgi apparatus membrane. The catalysed reaction is [N-acetyl-alpha-D-neuraminosyl-(2-&gt;8)](n) + CMP-N-acetyl-beta-neuraminate = [N-acetyl-alpha-D-neuraminosyl-(2-&gt;8)](n+1) + CMP + H(+). It catalyses the reaction alpha-Neu5Ac-(2-&gt;3)-beta-D-Gal-(1-&gt;4)-6S-D-GlcNAc + CMP-N-acetyl-beta-neuraminate = alpha-Neu5Ac-(2-&gt;8)-alpha-Neu5Ac-(2-&gt;3)-beta-D-Gal-(1-&gt;4)-6S-D-GlcNAc + CMP + H(+). It carries out the reaction a ganglioside GM3 (d18:1(4E)) + CMP-N-acetyl-beta-neuraminate = a ganglioside GD3 (d18:1(4E)) + CMP + H(+). The enzyme catalyses a ganglioside GM3 + CMP-N-acetyl-beta-neuraminate = a ganglioside GD3 + CMP + H(+). The catalysed reaction is an N-acetyl-alpha-neuraminyl-(2-&gt;3)-beta-D-galactosyl derivative + CMP-N-acetyl-beta-neuraminate = an N-acetyl-alpha-neuraminyl-(2-&gt;8)-N-acetyl-alpha-neuraminyl-(2-&gt;3)-beta-D-galactosyl derivative + CMP + H(+). It catalyses the reaction an N-acetyl-alpha-neuraminyl-(2-&gt;3)-beta-D-galactosyl-(1-&gt;4)-N-acetyl-beta-D-glucosaminyl derivative + CMP-N-acetyl-beta-neuraminate = an alpha-Neu5Ac-(2-&gt;8)-alpha-Neu5Ac-(2-&gt;3)-beta-D-Gal-(1-&gt;4)-beta-D-GlcNAc derivative + CMP + H(+). Its pathway is protein modification; protein glycosylation. In terms of biological role, catalyzes the transfer of sialic acid from a CMP-linked sialic acid donor onto a terminal alpha-2,3-, alpha-2,6-, or alpha-2,8-linked sialic acid of an acceptor, such as N-linked oligosaccharides of glycoproteins and glycolipids through alpha-2,8-linkages. Forms oligosialic and polysialic acid on various sialylated N-acetyllactosamine oligosaccharides of glycoproteins, including FETUB N-glycans, a2-HS-glycoprotein (AHSG) and alpha 2,3-sialylated glycosphingolipids, such as alpha 2,3-sialylparagloboside and ganglioside GM3 and to a lesser extent NCAM1 N-glycans. However, it is much more specific to N-linked oligosaccharides of glycoproteins than glycosphingolipids. 2,3-sialylparagloboside serves as the best acceptor substrate among the glycolipids. alpha-Neu5Ac-(2-&gt;8)-alpha-Neu5Ac-(2-&gt;3)-beta-D-Gal-(1-&gt;4)-6S-D-GlcNAc and monosialyl and disialyl N-acetyllactosamines are the best acceptor substrates among glycoproteins. May plays critical role in the striatum by mediating the formation of disialylated and trisialylated terminal glycotopes on N- and O-glycans of specific striatal proteins, regulating their distribution in lipid rafts, affecting their interaction with other binding partners, and subsequently modulating striatal functions. The sequence is that of Alpha-N-acetylneuraminate alpha-2,8-sialyltransferase ST8SIA3 from Pan troglodytes (Chimpanzee).